A 463-amino-acid polypeptide reads, in one-letter code: L-seryl-tRNA(Sec) selenium transferase (463 aa).

Lysine 295 carries the post-translational modification N6-(pyridoxal phosphate)lysine.

This sequence belongs to the SelA family. Homodecamer; pentamer of dimers. Binds only one seryl-tRNA(Sec) per dimer. The cofactor is pyridoxal 5'-phosphate.

The protein resides in the cytoplasm. It catalyses the reaction L-seryl-tRNA(Sec) + selenophosphate + H(+) = L-selenocysteinyl-tRNA(Sec) + phosphate. Its pathway is aminoacyl-tRNA biosynthesis; selenocysteinyl-tRNA(Sec) biosynthesis; selenocysteinyl-tRNA(Sec) from L-seryl-tRNA(Sec) (bacterial route): step 1/1. Functionally, converts seryl-tRNA(Sec) to selenocysteinyl-tRNA(Sec) required for selenoprotein biosynthesis. In Photorhabdus laumondii subsp. laumondii (strain DSM 15139 / CIP 105565 / TT01) (Photorhabdus luminescens subsp. laumondii), this protein is L-seryl-tRNA(Sec) selenium transferase.